A 194-amino-acid chain; its full sequence is Probable molybdenum cofactor guanylyltransferase (194 aa).

Residues leucine 8–glycine 10, lysine 20, and aspartate 99 each bind GTP. Aspartate 99 lines the Mg(2+) pocket.

It belongs to the MobA family. Mg(2+) is required as a cofactor.

It is found in the cytoplasm. The catalysed reaction is Mo-molybdopterin + GTP + H(+) = Mo-molybdopterin guanine dinucleotide + diphosphate. In terms of biological role, transfers a GMP moiety from GTP to Mo-molybdopterin (Mo-MPT) cofactor (Moco or molybdenum cofactor) to form Mo-molybdopterin guanine dinucleotide (Mo-MGD) cofactor. The polypeptide is Probable molybdenum cofactor guanylyltransferase (Synechococcus elongatus (strain ATCC 33912 / PCC 7942 / FACHB-805) (Anacystis nidulans R2)).